The chain runs to 245 residues: Carboxymethylenebutenolidase homolog (245 aa).

An N-acetylalanine modification is found at Ala2. The residue at position 36 (Lys36) is an N6-acetyllysine. Residues Cys132, Asp179, and His212 contribute to the active site. Position 223 is a phosphoserine (Ser223).

The protein belongs to the dienelactone hydrolase family.

The protein localises to the cytoplasm. It is found in the cytosol. Functionally, cysteine hydrolase. This Pongo abelii (Sumatran orangutan) protein is Carboxymethylenebutenolidase homolog (CMBL).